Here is a 63-residue protein sequence, read N- to C-terminus: Potassium channel toxin MeuTXKalpha4 (63 aa).

An N-terminal signal peptide occupies residues 1 to 28; it reads MSRLLIFILTAVVLSVIIDILNNSKVEG. 3 disulfide bridges follow: Cys-35–Cys-53, Cys-39–Cys-59, and Cys-43–Cys-61.

The protein belongs to the short scorpion toxin superfamily. Potassium channel inhibitor family. Expressed by the venom gland.

The protein localises to the secreted. Functionally, may block voltage-gated potassium channels (Kv). In Mesobuthus eupeus (Lesser Asian scorpion), this protein is Potassium channel toxin MeuTXKalpha4.